Reading from the N-terminus, the 612-residue chain is BTB/POZ domain-containing protein 9 (612 aa).

One can recognise a BTB domain in the interval 36 to 104 (GDVTFVVEKK…IYTGRATLTD (69 aa)). Residues 142–240 (VCMTFDVASL…SLTELLNVVR (99 aa)) form the BACK domain. Residues 559 to 612 (QQSTQKEDSSEEPGTGDLSTPSQQLDPHAPRAPSASSLPPSPGPNLHSPNQQNQ) form a disordered region. The segment covering 589-612 (RAPSASSLPPSPGPNLHSPNQQNQ) has biased composition (low complexity).

In terms of tissue distribution, detected throughout the gray matter of the spinal cord including the motor neurons (at protein level). In the brain, detected in the neurons of the hippocampus and in the Purkinje cells of the cerebellum (at protein level). Also detected in the terospenial cortex, bed nucleus of the stria terminalis (BST) and the ventrolateral thalamus (VL) (at protein level).

The protein is BTB/POZ domain-containing protein 9 (Btbd9) of Rattus norvegicus (Rat).